Here is a 291-residue protein sequence, read N- to C-terminus: AA14 family lytic polysaccharide monooxygenase (291 aa).

Positions 1-17 (MLTTAILFTSLAGSAYA) are cleaved as a signal peptide. Residue Asn-141 is glycosylated (N-linked (GlcNAc...) asparagine). Disulfide bonds link Cys-192/Cys-197, Cys-199/Cys-220, and Cys-240/Cys-247.

Belongs to the polysaccharide monooxygenase AA14 family. Requires Cu(2+) as cofactor.

The protein localises to the secreted. In terms of biological role, lytic polysaccharide monooxygenase (LPMO) that is active against heteroxylan, xyloglucan and cellulose in beta-cellulose and released native oligosaccharides and corresponding C1- and/or C4-oxidized products. May act mainly on heteroxylan with numerous arabinosyl substituents between cellulose fibers rather than on recalcitrant xylan tightly associated with cellulose. Catalysis by LPMOs requires the reduction of the active-site copper from Cu(II) to Cu(I) by a reducing agent and H(2)O(2) or O(2) as a cosubstrate. Shows a branched chain preference, and has synergistic effects with the Penicillium parvum debranching enzyme ABF62C in an enzyme- and ascorbic acid-dependent manner. Also has synergistic effects with the Penicillium parvum GH10 endoxylanase XYN1, and the degree of synergy was greater with step-by-step addition than with simultaneous addition. The polypeptide is AA14 family lytic polysaccharide monooxygenase (Sordaria brevicollis).